A 215-amino-acid polypeptide reads, in one-letter code: Pyrrolidone-carboxylate peptidase (215 aa).

Catalysis depends on residues glutamate 78, cysteine 141, and histidine 165.

The protein belongs to the peptidase C15 family. As to quaternary structure, homotetramer.

It localises to the cytoplasm. The enzyme catalyses Release of an N-terminal pyroglutamyl group from a polypeptide, the second amino acid generally not being Pro.. Functionally, removes 5-oxoproline from various penultimate amino acid residues except L-proline. This chain is Pyrrolidone-carboxylate peptidase, found in Streptococcus pyogenes serotype M12 (strain MGAS2096).